Consider the following 500-residue polypeptide: Probable cytosol aminopeptidase (500 aa).

Residues Lys-262 and Asp-267 each coordinate Mn(2+). Lys-274 is an active-site residue. Residues Asp-285, Asp-344, and Glu-346 each coordinate Mn(2+). Residue Arg-348 is part of the active site.

This sequence belongs to the peptidase M17 family. Mn(2+) serves as cofactor.

It localises to the cytoplasm. The enzyme catalyses Release of an N-terminal amino acid, Xaa-|-Yaa-, in which Xaa is preferably Leu, but may be other amino acids including Pro although not Arg or Lys, and Yaa may be Pro. Amino acid amides and methyl esters are also readily hydrolyzed, but rates on arylamides are exceedingly low.. It catalyses the reaction Release of an N-terminal amino acid, preferentially leucine, but not glutamic or aspartic acids.. Functionally, presumably involved in the processing and regular turnover of intracellular proteins. Catalyzes the removal of unsubstituted N-terminal amino acids from various peptides. This is Probable cytosol aminopeptidase from Ehrlichia ruminantium (strain Welgevonden).